The primary structure comprises 224 residues: UPF0758 protein Tbd_2588 (224 aa).

In terms of domain architecture, MPN spans 102-224 (ALSSPAAVRD…ALSFAEAGHL (123 aa)). Zn(2+)-binding residues include His173, His175, and Asp186. A JAMM motif motif is present at residues 173 to 186 (HNHPSGVNEPSQAD).

This sequence belongs to the UPF0758 family.

In Thiobacillus denitrificans (strain ATCC 25259 / T1), this protein is UPF0758 protein Tbd_2588.